The primary structure comprises 120 residues: Large ribosomal subunit protein bL19c (120 aa).

This sequence belongs to the bacterial ribosomal protein bL19 family.

Its subcellular location is the plastid. It localises to the chloroplast. The polypeptide is Large ribosomal subunit protein bL19c (Thalassiosira weissflogii (Marine diatom)).